Reading from the N-terminus, the 157-residue chain is Ribosome maturation factor RimP (157 aa).

Belongs to the RimP family.

The protein localises to the cytoplasm. Functionally, required for maturation of 30S ribosomal subunits. The polypeptide is Ribosome maturation factor RimP (Bacillus pumilus (strain SAFR-032)).